A 121-amino-acid chain; its full sequence is uncharacterized protein (121 aa).

Disordered regions lie at residues 38 to 76 (NQMAQKRNKQSKKPKQTSKGVKKSSKQNKNSSKNNKYQQ) and 91 to 121 (SVLRSAHNSGSKMSDISNSIQLLSMTKKQEN). Over residues 43–63 (KRNKQSKKPKQTSKGVKKSSK) the composition is skewed to basic residues. Residues 64–76 (QNKNSSKNNKYQQ) show a composition bias toward low complexity.

This is an uncharacterized protein from Schizosaccharomyces pombe (strain 972 / ATCC 24843) (Fission yeast).